The following is a 288-amino-acid chain: Stomatin (288 aa).

The interval 1–22 (MAEKRHTRDSEAQRLPDSFKDS) is disordered. Residues 1–25 (MAEKRHTRDSEAQRLPDSFKDSPSK) are Cytoplasmic-facing. Serine 10 carries the phosphoserine; by PKA modification. A Phosphoserine modification is found at serine 18. Residues 26-54 (GLGPCGWILVAFSFLFTVITFPISIWMCI) lie within the membrane without spanning it. The S-palmitoyl cysteine moiety is linked to residue cysteine 30. The Cytoplasmic portion of the chain corresponds to 55–288 (KIIKEYERAI…IIGAKHSHLG (234 aa)). Cysteine 87 is lipidated: S-palmitoyl cysteine; partial. Phosphoserine is present on residues serine 161 and serine 244. The tract at residues 265–273 (STIVFPLPI) is required for homooligomerization. The required for lipid raft association stretch occupies residues 267 to 269 (IVF). Residues 273 to 287 (IDMLQGIIGAKHSHL) are interaction with LANCL1.

Belongs to the band 7/mec-2 family. In terms of assembly, homodimer and higher order homooligomer. The homodimer is banana-shaped. Interacts with ASIC1, ASIC2 and ASIC3. Interacts with LANCL1. Interacts with SLC2A1. Interacts with SLC4A1; this interaction positively regulates SLC4A1 activity. Identified in large complexes with SLC40A1, SLC14A1, SLC29A1 and AQP1. Interacts with STOML1; may redistribute STOM from the plasma membrane to late endosomes. As to expression, detected in erythrocytes (at protein level). Widely expressed.

It localises to the cell membrane. It is found in the cytoplasm. The protein resides in the cytoskeleton. Its subcellular location is the membrane raft. The protein localises to the melanosome. It localises to the cytoplasmic vesicle. Regulates ion channel activity and transmembrane ion transport. Regulates ASIC2 and ASIC3 channel activity. The protein is Stomatin of Homo sapiens (Human).